The following is a 390-amino-acid chain: Magnesium-protoporphyrin IX monomethyl ester [oxidative] cyclase (390 aa).

This sequence belongs to the AcsF family. Fe cation serves as cofactor.

The catalysed reaction is Mg-protoporphyrin IX 13-monomethyl ester + 3 NADPH + 3 O2 + 2 H(+) = 3,8-divinyl protochlorophyllide a + 3 NADP(+) + 5 H2O. It participates in porphyrin-containing compound metabolism; chlorophyll biosynthesis (light-independent). Functionally, catalyzes the formation of the isocyclic ring in chlorophyll biosynthesis. Mediates the cyclase reaction, which results in the formation of divinylprotochlorophyllide (Pchlide) characteristic of all chlorophylls from magnesium-protoporphyrin IX 13-monomethyl ester (MgPMME). This is Magnesium-protoporphyrin IX monomethyl ester [oxidative] cyclase from Prochlorococcus marinus (strain MIT 9312).